Here is an 845-residue protein sequence, read N- to C-terminus: Dynein axonemal assembly factor 5 (845 aa).

8 HEAT repeats span residues 47 to 84 (DVFD…SLPP), 138 to 175 (ECYP…LADT), 180 to 217 (PFTE…HMDA), 260 to 297 (SFFE…QYFN), 332 to 369 (QRSL…HAEA), 523 to 561 (NFGQ…LDAA), 674 to 715 (SESV…MSVE), and 766 to 803 (AIVK…SHPE).

The protein belongs to the DNAAF5 family. As to expression, expressed in testis.

It localises to the cytoplasm. The protein localises to the dynein axonemal particle. Cytoplasmic protein involved in the delivery of the dynein machinery to the motile cilium. It is required for the assembly of the axonemal dynein inner and outer arms, two structures attached to the peripheral outer doublet A microtubule of the axoneme, that play a crucial role in cilium motility. This Drosophila melanogaster (Fruit fly) protein is Dynein axonemal assembly factor 5.